Reading from the N-terminus, the 276-residue chain is Acyl-[acyl-carrier-protein]--UDP-N-acetylglucosamine O-acyltransferase (276 aa).

Belongs to the transferase hexapeptide repeat family. LpxA subfamily. Homotrimer.

It is found in the cytoplasm. It carries out the reaction a (3R)-hydroxyacyl-[ACP] + UDP-N-acetyl-alpha-D-glucosamine = a UDP-3-O-[(3R)-3-hydroxyacyl]-N-acetyl-alpha-D-glucosamine + holo-[ACP]. Its pathway is glycolipid biosynthesis; lipid IV(A) biosynthesis; lipid IV(A) from (3R)-3-hydroxytetradecanoyl-[acyl-carrier-protein] and UDP-N-acetyl-alpha-D-glucosamine: step 1/6. Its function is as follows. Involved in the biosynthesis of lipid A, a phosphorylated glycolipid that anchors the lipopolysaccharide to the outer membrane of the cell. The sequence is that of Acyl-[acyl-carrier-protein]--UDP-N-acetylglucosamine O-acyltransferase from Synechocystis sp. (strain ATCC 27184 / PCC 6803 / Kazusa).